We begin with the raw amino-acid sequence, 49 residues long: Large ribosomal subunit protein bL33A (49 aa).

The protein belongs to the bacterial ribosomal protein bL33 family.

The polypeptide is Large ribosomal subunit protein bL33A (Limosilactobacillus reuteri subsp. reuteri (strain JCM 1112) (Lactobacillus reuteri)).